The primary structure comprises 334 residues: Glycerol-1-phosphate dehydrogenase [NAD(P)+] (334 aa).

Residues Gly77–Asp81 and Thr99–Ser102 each bind NAD(+). A substrate-binding site is contributed by Asp104. Ser108 contacts NAD(+). Residue Asp147 participates in substrate binding. Residues Asp147 and His225 each coordinate Zn(2+). His229 provides a ligand contact to substrate. His246 is a binding site for Zn(2+).

It belongs to the glycerol-1-phosphate dehydrogenase family. Requires Zn(2+) as cofactor.

It localises to the cytoplasm. The enzyme catalyses sn-glycerol 1-phosphate + NAD(+) = dihydroxyacetone phosphate + NADH + H(+). It carries out the reaction sn-glycerol 1-phosphate + NADP(+) = dihydroxyacetone phosphate + NADPH + H(+). It functions in the pathway membrane lipid metabolism; glycerophospholipid metabolism. In terms of biological role, catalyzes the NAD(P)H-dependent reduction of dihydroxyacetonephosphate (DHAP or glycerone phosphate) to glycerol 1-phosphate (G1P). The G1P thus generated is used as the glycerophosphate backbone of phospholipids in the cellular membranes of Archaea. The polypeptide is Glycerol-1-phosphate dehydrogenase [NAD(P)+] (Methanococcus maripaludis (strain C7 / ATCC BAA-1331)).